Here is a 309-residue protein sequence, read N- to C-terminus: 1,4-dihydroxy-2-naphthoyl-CoA synthase (309 aa).

Substrate-binding positions include Arg-53, 98 to 102 (SGGDQ), Tyr-110, 152 to 156 (WAAGG), Thr-179, Ser-185, Tyr-282, and Lys-297.

Belongs to the enoyl-CoA hydratase/isomerase family. MenB subfamily.

The catalysed reaction is 2-succinylbenzoyl-CoA + H(+) = 1,4-dihydroxy-2-naphthoyl-CoA + H2O. It functions in the pathway quinol/quinone metabolism; 1,4-dihydroxy-2-naphthoate biosynthesis; 1,4-dihydroxy-2-naphthoate from chorismate: step 6/7. It participates in quinol/quinone metabolism; menaquinone biosynthesis. Its function is as follows. Converts o-succinylbenzoyl-CoA (OSB-CoA) to 1,4-dihydroxy-2-naphthoyl-CoA (DHNA-CoA). The chain is 1,4-dihydroxy-2-naphthoyl-CoA synthase from Mycolicibacterium smegmatis (strain ATCC 700084 / mc(2)155) (Mycobacterium smegmatis).